A 69-amino-acid chain; its full sequence is Conotoxin reg3.6 (69 aa).

The N-terminal stretch at 1–20 is a signal peptide; sequence MMSKLGVLLTICLLLFPLSA. The propeptide occupies 21–52; sequence LPLDGDQPADQPAERVQDISPDQNPLFHLVKR. 3 disulfide bridges follow: Cys-54-Cys-68, Cys-55-Cys-66, and Cys-60-Cys-69.

The protein belongs to the conotoxin M superfamily. In terms of tissue distribution, expressed by the venom duct.

The protein resides in the secreted. This Conus regius (Crown cone) protein is Conotoxin reg3.6.